Consider the following 377-residue polypeptide: tRNA N6-adenosine threonylcarbamoyltransferase (377 aa).

Residues H129 and H133 each coordinate Fe cation. Substrate is bound by residues 151–155 (LVSGG), D184, G197, and N298. D326 serves as a coordination point for Fe cation. Residues 358-377 (DGAAAKSDPAIGSGRKGPKA) form a disordered region.

It belongs to the KAE1 / TsaD family. Fe(2+) is required as a cofactor.

It localises to the cytoplasm. It carries out the reaction L-threonylcarbamoyladenylate + adenosine(37) in tRNA = N(6)-L-threonylcarbamoyladenosine(37) in tRNA + AMP + H(+). In terms of biological role, required for the formation of a threonylcarbamoyl group on adenosine at position 37 (t(6)A37) in tRNAs that read codons beginning with adenine. Is involved in the transfer of the threonylcarbamoyl moiety of threonylcarbamoyl-AMP (TC-AMP) to the N6 group of A37, together with TsaE and TsaB. TsaD likely plays a direct catalytic role in this reaction. The protein is tRNA N6-adenosine threonylcarbamoyltransferase of Maricaulis maris (strain MCS10) (Caulobacter maris).